A 424-amino-acid polypeptide reads, in one-letter code: L-glutamine:2-deoxy-scyllo-inosose aminotransferase (424 aa).

Lys202 is subject to N6-(pyridoxal phosphate)lysine.

It belongs to the DegT/DnrJ/EryC1 family. L-glutamine:2-deoxy-scyllo-inosose/scyllo-inosose aminotransferase subfamily. It depends on pyridoxal 5'-phosphate as a cofactor.

It carries out the reaction 2-deoxy-L-scyllo-inosose + L-glutamine = 2-deoxy-scyllo-inosamine + 2-oxoglutaramate. The enzyme catalyses 3-amino-2,3-dideoxy-scyllo-inosose + L-glutamine = 2-deoxystreptamine + 2-oxoglutaramate. It participates in metabolic intermediate biosynthesis; 2-deoxystreptamine biosynthesis; 2-deoxystreptamine from D-glucose 6-phosphate: step 2/4. The protein operates within metabolic intermediate biosynthesis; 2-deoxystreptamine biosynthesis; 2-deoxystreptamine from D-glucose 6-phosphate: step 4/4. It functions in the pathway antibiotic biosynthesis; neomycin biosynthesis. Functionally, catalyzes the PLP-dependent transamination of 2-deoxy-scyllo-inosose (2-DOI) to form 2-deoxy-scyllo-inosamine (2-DOIA) using L-glutamine as the amino donor. Also catalyzes the transamination of 3-amino-2,3-dideoxy-scyllo-inosose (keto-2-DOIA) into 2-deoxystreptamine (2-DOS). In Streptomyces fradiae (Streptomyces roseoflavus), this protein is L-glutamine:2-deoxy-scyllo-inosose aminotransferase (neoB).